The primary structure comprises 92 residues: Neurophysin 2 (92 aa).

Disulfide bonds link cysteine 7-cysteine 51, cysteine 10-cysteine 24, cysteine 18-cysteine 41, cysteine 25-cysteine 31, cysteine 58-cysteine 70, cysteine 64-cysteine 82, and cysteine 71-cysteine 76.

The protein belongs to the vasopressin/oxytocin family.

The protein resides in the secreted. In terms of biological role, neurophysin 2 specifically binds the midbrain peptide hormone vasopressin. The sequence is that of Neurophysin 2 (AVP) from Equus caballus (Horse).